The sequence spans 436 residues: Xylose isomerase (436 aa).

Active-site residues include His100 and Asp103. 7 residues coordinate Mg(2+): Glu231, Glu267, His270, Asp295, Asp306, Asp308, and Asp338.

Belongs to the xylose isomerase family. In terms of assembly, homotetramer. It depends on Mg(2+) as a cofactor.

The protein resides in the cytoplasm. The catalysed reaction is alpha-D-xylose = alpha-D-xylulofuranose. The chain is Xylose isomerase from Agrobacterium fabrum (strain C58 / ATCC 33970) (Agrobacterium tumefaciens (strain C58)).